The sequence spans 212 residues: Outer-membrane lipoprotein LolB (212 aa).

Positions 1–16 are cleaved as a signal peptide; sequence MACRSWVLGILLVLVG. C17 is lipidated: N-palmitoyl cysteine. C17 carries the S-diacylglycerol cysteine lipid modification.

It belongs to the LolB family. In terms of assembly, monomer.

The protein resides in the cell outer membrane. Functionally, plays a critical role in the incorporation of lipoproteins in the outer membrane after they are released by the LolA protein. The protein is Outer-membrane lipoprotein LolB of Nitrosomonas europaea (strain ATCC 19718 / CIP 103999 / KCTC 2705 / NBRC 14298).